We begin with the raw amino-acid sequence, 784 residues long: 1-phosphatidylinositol 4,5-bisphosphate phosphodiesterase delta-3-A (784 aa).

The segment at 1 to 25 (MLGRKKNPETVQTESKSVESKTHDP) is disordered. The segment covering 16-25 (KSVESKTHDP) has biased composition (basic and acidic residues). The 112-residue stretch at 38 to 149 (LLMLQGSKMM…WVRGIRTLKD (112 aa)) folds into the PH domain. The substrate binding stretch occupies residues 48–78 (KVRSQRWRKDRRLKLLEDCVTVWCESSKTSR). EF-hand domains lie at 159–194 (KLDH…INID), 195–230 (LNEQ…MMRR), and 227–262 (MMRR…QGED). Residues aspartate 172, asparagine 174, aspartate 176, lysine 178, glutamate 183, aspartate 208, serine 210, aspartate 212, arginine 214, and glutamate 219 each coordinate Ca(2+). One can recognise a PI-PLC X-box domain in the interval 313–458 (QDMSKPLAHY…LKGRILLKGK (146 aa)). Residue histidine 328 is part of the active site. The Ca(2+) site is built by asparagine 329, glutamate 358, and aspartate 360. The active site involves histidine 373. Glutamate 407 contacts Ca(2+). Residues lysine 456 and lysine 458 each coordinate substrate. Residues 473-498 (FTNSSDEESVAGGNKKESKKDLARSA) form a disordered region. Residues 486-495 (NKKESKKDLA) are compositionally biased toward basic and acidic residues. Residues 506-621 (LSDLVVYCQS…GYVLKPEFLC (116 aa)) enclose the PI-PLC Y-box domain. Serine 534 and arginine 561 together coordinate substrate. The C2 domain occupies 621 to 750 (CDPKSDFDPE…TGYRHVHLLK (130 aa)). Residues isoleucine 664, aspartate 666, asparagine 690, aspartate 719, and aspartate 721 each coordinate Ca(2+).

Ca(2+) is required as a cofactor.

It localises to the membrane. Its subcellular location is the cytoplasm. The protein resides in the cleavage furrow. The catalysed reaction is a 1,2-diacyl-sn-glycero-3-phospho-(1D-myo-inositol-4,5-bisphosphate) + H2O = 1D-myo-inositol 1,4,5-trisphosphate + a 1,2-diacyl-sn-glycerol + H(+). Functionally, hydrolyzes the phosphatidylinositol 4,5-bisphosphate (PIP2) to generate 2 second messenger molecules diacylglycerol (DAG) and inositol 1,4,5-trisphosphate (IP3). DAG mediates the activation of protein kinase C (PKC), while IP3 releases Ca(2+) from intracellular stores. The chain is 1-phosphatidylinositol 4,5-bisphosphate phosphodiesterase delta-3-A (plcd3a) from Danio rerio (Zebrafish).